Consider the following 516-residue polypeptide: Maturase K (516 aa).

It belongs to the intron maturase 2 family. MatK subfamily.

Its subcellular location is the plastid. The protein localises to the chloroplast. Functionally, usually encoded in the trnK tRNA gene intron. Probably assists in splicing its own and other chloroplast group II introns. This chain is Maturase K, found in Galanthus nivalis (Common snowdrop).